Consider the following 76-residue polypeptide: LVIVFVVLLGVPLISANEEELLAILQDQRNDARGGCLNRYKSNICGTLVTPMNCITPRTRMGKFARKFCQFMCGIC.

Positions 1–16 (LVIVFVVLLGVPLISA) are cleaved as a signal peptide. Positions 17-33 (NEEELLAILQDQRNDAR) are excised as a propeptide.

Belongs to the sea anemone 8 toxin family.

The protein resides in the secreted. It is found in the nematocyst. The chain is U-actitoxin-Avd8c from Anemonia viridis (Snakelocks anemone).